The sequence spans 301 residues: Mycothiol acetyltransferase (301 aa).

2 consecutive N-acetyltransferase domains span residues 7 to 150 and 152 to 301; these read VDWQ…PPVD and VRFA…AVEG. Asp39 is a binding site for 1D-myo-inositol 2-(L-cysteinylamino)-2-deoxy-alpha-D-glucopyranoside. Residues 80–82 and 88–93 contribute to the acetyl-CoA site; these read LVV and RRGIGS. The 1D-myo-inositol 2-(L-cysteinylamino)-2-deoxy-alpha-D-glucopyranoside site is built by Glu179, Lys220, and Glu228. Residue 232-234 participates in acetyl-CoA binding; the sequence is VGV. Tyr271 provides a ligand contact to 1D-myo-inositol 2-(L-cysteinylamino)-2-deoxy-alpha-D-glucopyranoside. 276–281 is a binding site for acetyl-CoA; that stretch reads NTAAVK.

The protein belongs to the acetyltransferase family. MshD subfamily. As to quaternary structure, monomer.

It carries out the reaction 1D-myo-inositol 2-(L-cysteinylamino)-2-deoxy-alpha-D-glucopyranoside + acetyl-CoA = mycothiol + CoA + H(+). Catalyzes the transfer of acetyl from acetyl-CoA to desacetylmycothiol (Cys-GlcN-Ins) to form mycothiol. The chain is Mycothiol acetyltransferase from Mycolicibacterium vanbaalenii (strain DSM 7251 / JCM 13017 / BCRC 16820 / KCTC 9966 / NRRL B-24157 / PYR-1) (Mycobacterium vanbaalenii).